Reading from the N-terminus, the 354-residue chain is NADH-quinone oxidoreductase subunit H (354 aa).

The next 8 helical transmembrane spans lie at 22–42 (ILIRAVIIVVPLLLCVAYLIL), 91–111 (YLIAPLMVLMPAVAVWAVIPF), 124–144 (LLYVMAISSVGVYGVILAGWA), 168–188 (MGFALVTVLMVAGSLNLSAIV), 203–223 (ILSWNWLPLLPMFGVYFISGV), 255–275 (LFFLAEYINMIIISTMTALMF), 291–311 (IPGFFWLVIKVFLLLSVFIWI), and 326–346 (LGWKVFIPLTVAWLIIVAIWI).

The protein belongs to the complex I subunit 1 family. NDH-1 is composed of 14 different subunits. Subunits NuoA, H, J, K, L, M, N constitute the membrane sector of the complex.

The protein localises to the cell inner membrane. It catalyses the reaction a quinone + NADH + 5 H(+)(in) = a quinol + NAD(+) + 4 H(+)(out). Functionally, NDH-1 shuttles electrons from NADH, via FMN and iron-sulfur (Fe-S) centers, to quinones in the respiratory chain. The immediate electron acceptor for the enzyme in this species is believed to be ubiquinone. Couples the redox reaction to proton translocation (for every two electrons transferred, four hydrogen ions are translocated across the cytoplasmic membrane), and thus conserves the redox energy in a proton gradient. This subunit may bind ubiquinone. The sequence is that of NADH-quinone oxidoreductase subunit H from Cupriavidus necator (strain ATCC 17699 / DSM 428 / KCTC 22496 / NCIMB 10442 / H16 / Stanier 337) (Ralstonia eutropha).